A 396-amino-acid chain; its full sequence is MAETQVRNFNINFGPQHPAAHGVLRLVLELDGEVVERVDPHIGLLHRGTEKLMEAKTYLQAVPYLDRLDYVAPMNQEHAYALAVERLLDIEVPKRGQLIRVLYSEIGRILNHLLNVTTQAMDVGALTPPLWGFEEREKLMVFYERACGARMHAAYFRPGGVHQDLPDQLIEDIGKWIDPFFTTLKNLDDLITPNRIFKQRNVDIGVVKLEDAWAWGFSGVMVRGSGAAWDLRKSQPYECYSEMEFDIPVGKNGDCYDRYLIRMEEMRQSVRIMRQCVDLLLGKERVGPVSNTDHKIVPPKRGEMKRSMEALIHHFKLYTEGYHVPAGEVYAAVEAPKGEFGVYLVSDGSNKPYRCKLRAPGFAHLQAMDFLCRGHMLADVSAILGSLDIVFGEVDR.

This sequence belongs to the complex I 49 kDa subunit family. In terms of assembly, NDH-1 is composed of 14 different subunits. Subunits NuoB, C, D, E, F, and G constitute the peripheral sector of the complex.

The protein localises to the cell inner membrane. It catalyses the reaction a quinone + NADH + 5 H(+)(in) = a quinol + NAD(+) + 4 H(+)(out). NDH-1 shuttles electrons from NADH, via FMN and iron-sulfur (Fe-S) centers, to quinones in the respiratory chain. The immediate electron acceptor for the enzyme in this species is believed to be ubiquinone. Couples the redox reaction to proton translocation (for every two electrons transferred, four hydrogen ions are translocated across the cytoplasmic membrane), and thus conserves the redox energy in a proton gradient. This Brucella melitensis biotype 1 (strain ATCC 23456 / CCUG 17765 / NCTC 10094 / 16M) protein is NADH-quinone oxidoreductase subunit D.